The following is a 660-amino-acid chain: UPF0603 protein MT2410 (660 aa).

Residues 1–26 (MRLVRLLGMVLTILAAGLLLGPPAGA) form the signal peptide. The chain crosses the membrane as a helical span at residues 162–182 (VVLLVTVGIIVIVVAVLLVVM). A coiled-coil region spans residues 488–567 (DQLTKVDADL…LEAAHDRKSS (80 aa)). The chain crosses the membrane as a helical span at residues 605–625 (GGNNAGAILGGIIIGDLLSGG). Residues 638 to 660 (FGGSSNAPGSSPDGGFLGGGGRF) are disordered.

The protein belongs to the UPF0603 family.

It is found in the cell membrane. Its function is as follows. May play a role in septum formation. This Mycobacterium tuberculosis (strain CDC 1551 / Oshkosh) protein is UPF0603 protein MT2410.